Here is a 171-residue protein sequence, read N- to C-terminus: uncharacterized protein (171 aa).

Belongs to the IUNH family.

This is an uncharacterized protein from Acidianus ambivalens (Desulfurolobus ambivalens).